A 176-amino-acid chain; its full sequence is MKFVSDLLSVILFFATYTVTKNMIAAAAVALVAGVVQAAFLYWKHKRLDTMQWVGLVLIVVFGGATIVLGDSRFIMWKPTVLFWCGALFLLGSHLAGKNGLKASIGREIQLPDAVWGKLTYMWVGFLIFMGIANWFVFTRFEAQWVNYKMFGSTALMLFFFIIQGIYLSTYLKKED.

Helical transmembrane passes span 23-43 (MIAA…FLYW), 50-70 (TMQW…IVLG), 74-94 (FIMW…LGSH), 119-139 (LTYM…FVFT), and 150-170 (MFGS…YLST).

The protein belongs to the YciB family.

It localises to the cell inner membrane. Its function is as follows. Plays a role in cell envelope biogenesis, maintenance of cell envelope integrity and membrane homeostasis. The protein is Inner membrane-spanning protein YciB of Neisseria gonorrhoeae (strain ATCC 700825 / FA 1090).